The following is a 299-amino-acid chain: Nicotinate-nucleotide pyrophosphorylase [carboxylating] (299 aa).

The important for hexamer formation stretch occupies residues 8–12; it reads LLLPP. Residues R102, 138–139, 160–161, K171, E201, D222, 248–250, and G270 contribute to the quinolinate site; these read RK, HR, and SGG.

It belongs to the NadC/ModD family. Hexamer formed by 3 homodimers.

The catalysed reaction is nicotinate beta-D-ribonucleotide + CO2 + diphosphate = quinolinate + 5-phospho-alpha-D-ribose 1-diphosphate + 2 H(+). The protein operates within cofactor biosynthesis; NAD(+) biosynthesis; nicotinate D-ribonucleotide from quinolinate: step 1/1. In terms of biological role, involved in the catabolism of quinolinic acid (QA). In Sus scrofa (Pig), this protein is Nicotinate-nucleotide pyrophosphorylase [carboxylating].